A 740-amino-acid polypeptide reads, in one-letter code: ATP-dependent zinc metalloprotease YME1L (740 aa).

The Mitochondrial matrix segment spans residues 1 to 256; sequence MFSTTTHSVP…KSGKTMKYLK (256 aa). Residues 257 to 277 traverse the membrane as a helical segment; the sequence is TLQTIVVIVVFLGIFLSFFTT. The Mitochondrial intermembrane segment spans residues 278–740; that stretch reads SNGSVFRSIQ…IKAILNESQT (463 aa). Residue 347 to 351 coordinates ATP; the sequence is GTGKT. Histidine 563 is a binding site for Zn(2+). Glutamate 564 is an active-site residue. Zn(2+)-binding residues include histidine 567 and aspartate 641.

In the N-terminal section; belongs to the AAA ATPase family. It in the C-terminal section; belongs to the peptidase M41 family. The cofactor is Zn(2+).

The protein resides in the mitochondrion inner membrane. ATP-dependent metalloprotease that catalyzes the degradation of folded and unfolded proteins with a suitable degron sequence in the mitochondrial intermembrane region. Plays an important role in regulating mitochondrial morphology and function by cleaving Opa1, giving rise to a form of Opa1 that promotes maintenance of normal mitochondrial structure and mitochondrial protein metabolism. Ensures cell proliferation, maintains normal cristae morphology and complex I respiration activity, promotes antiapoptotic activity and protects mitochondria from the accumulation of oxidatively damaged membrane proteins. Required to control the accumulation of nonassembled respiratory chain subunits such as ND-30. The chain is ATP-dependent zinc metalloprotease YME1L from Drosophila melanogaster (Fruit fly).